Reading from the N-terminus, the 359-residue chain is uncharacterized protein (359 aa).

Residues 163–275 (VVDTSCIIDG…SKVANLQKVQ (113 aa)) enclose the PINc domain. The Mg(2+) site is built by Asp-165 and Asp-244. The 62-residue stretch at 289–350 (IYLPGDSLEL…LQTSAGRMIF (62 aa)) folds into the TRAM domain.

This sequence belongs to the ycf81 family. The protein in the central section; belongs to the PINc/VapC protein family. Mg(2+) is required as a cofactor.

Functionally, an RNase. This is an uncharacterized protein from Synechocystis sp. (strain ATCC 27184 / PCC 6803 / Kazusa).